The primary structure comprises 358 residues: Putative movement protein (358 aa).

In terms of biological role, transports viral genome to neighboring plant cells directly through plasmosdesmata, without any budding. The movement protein allows efficient cell to cell propagation, by bypassing the host cell wall barrier (Potential). In Raspberry bushy dwarf virus (isolate Malling Jewel raspberry/R15) (RBDV), this protein is Putative movement protein.